The sequence spans 78 residues: Translation initiation factor IF-1 (78 aa).

The S1-like domain maps to 2–78 (SKNNLNETES…TQARITYRFK (77 aa)).

It belongs to the IF-1 family. As to quaternary structure, component of the 30S ribosomal translation pre-initiation complex which assembles on the 30S ribosome in the order IF-2 and IF-3, IF-1 and N-formylmethionyl-tRNA(fMet); mRNA recruitment can occur at any time during PIC assembly.

It localises to the cytoplasm. Functionally, one of the essential components for the initiation of protein synthesis. Stabilizes the binding of IF-2 and IF-3 on the 30S subunit to which N-formylmethionyl-tRNA(fMet) subsequently binds. Helps modulate mRNA selection, yielding the 30S pre-initiation complex (PIC). Upon addition of the 50S ribosomal subunit IF-1, IF-2 and IF-3 are released leaving the mature 70S translation initiation complex. The chain is Translation initiation factor IF-1 from Aster yellows witches'-broom phytoplasma (strain AYWB).